The chain runs to 102 residues: NADH-quinone oxidoreductase subunit K (102 aa).

Transmembrane regions (helical) follow at residues 5–25 (LTQY…GIIL), 30–50 (IIII…NLVA), and 62–82 (IFAL…LAIL).

It belongs to the complex I subunit 4L family. NDH-1 is composed of 14 different subunits. Subunits NuoA, H, J, K, L, M, N constitute the membrane sector of the complex.

It is found in the cell inner membrane. The enzyme catalyses a quinone + NADH + 5 H(+)(in) = a quinol + NAD(+) + 4 H(+)(out). Its function is as follows. NDH-1 shuttles electrons from NADH, via FMN and iron-sulfur (Fe-S) centers, to quinones in the respiratory chain. The immediate electron acceptor for the enzyme in this species is believed to be ubiquinone. Couples the redox reaction to proton translocation (for every two electrons transferred, four hydrogen ions are translocated across the cytoplasmic membrane), and thus conserves the redox energy in a proton gradient. The polypeptide is NADH-quinone oxidoreductase subunit K (Beijerinckia indica subsp. indica (strain ATCC 9039 / DSM 1715 / NCIMB 8712)).